A 179-amino-acid chain; its full sequence is ATP synthase subunit b (179 aa).

The helical transmembrane segment at 29–48 (VINLAILIGVLVYFGRGVLG) threads the bilayer.

Belongs to the ATPase B chain family. As to quaternary structure, F-type ATPases have 2 components, F(1) - the catalytic core - and F(0) - the membrane proton channel. F(1) has five subunits: alpha(3), beta(3), gamma(1), delta(1), epsilon(1). F(0) has four main subunits: a(1), b(1), b'(1) and c(10-14). The alpha and beta chains form an alternating ring which encloses part of the gamma chain. F(1) is attached to F(0) by a central stalk formed by the gamma and epsilon chains, while a peripheral stalk is formed by the delta, b and b' chains.

Its subcellular location is the cellular thylakoid membrane. F(1)F(0) ATP synthase produces ATP from ADP in the presence of a proton or sodium gradient. F-type ATPases consist of two structural domains, F(1) containing the extramembraneous catalytic core and F(0) containing the membrane proton channel, linked together by a central stalk and a peripheral stalk. During catalysis, ATP synthesis in the catalytic domain of F(1) is coupled via a rotary mechanism of the central stalk subunits to proton translocation. In terms of biological role, component of the F(0) channel, it forms part of the peripheral stalk, linking F(1) to F(0). Functionally, the complex from the organism is particularly stable to disruption and remains functional after 6 hrs at 55 degrees Celsius. This chain is ATP synthase subunit b, found in Thermosynechococcus vestitus (strain NIES-2133 / IAM M-273 / BP-1).